A 117-amino-acid chain; its full sequence is Photosystem II reaction center Psb28 protein (117 aa).

The protein belongs to the Psb28 family. As to quaternary structure, part of the photosystem II complex.

Its subcellular location is the cellular thylakoid membrane. The chain is Photosystem II reaction center Psb28 protein from Prochlorococcus marinus (strain MIT 9211).